Here is a 501-residue protein sequence, read N- to C-terminus: Glycerol kinase (501 aa).

Threonine 12 is a binding site for ADP. 3 residues coordinate ATP: threonine 12, threonine 13, and serine 14. Threonine 12 is a sn-glycerol 3-phosphate binding site. Arginine 16 contributes to the ADP binding site. Residues arginine 82, glutamate 83, tyrosine 134, and aspartate 244 each coordinate sn-glycerol 3-phosphate. Arginine 82, glutamate 83, tyrosine 134, aspartate 244, and glutamine 245 together coordinate glycerol. The ADP site is built by threonine 266 and glycine 310. ATP is bound by residues threonine 266, glycine 310, glutamine 314, and glycine 411. Glycine 411 and asparagine 415 together coordinate ADP.

This sequence belongs to the FGGY kinase family.

It carries out the reaction glycerol + ATP = sn-glycerol 3-phosphate + ADP + H(+). The protein operates within polyol metabolism; glycerol degradation via glycerol kinase pathway; sn-glycerol 3-phosphate from glycerol: step 1/1. Inhibited by fructose 1,6-bisphosphate (FBP). Functionally, key enzyme in the regulation of glycerol uptake and metabolism. Catalyzes the phosphorylation of glycerol to yield sn-glycerol 3-phosphate. The protein is Glycerol kinase of Methylorubrum populi (strain ATCC BAA-705 / NCIMB 13946 / BJ001) (Methylobacterium populi).